The primary structure comprises 158 residues: uncharacterized protein (158 aa).

The next 4 helical transmembrane spans lie at 42–62 (FHFAVIVITMLAYLSAFGFLY), 71–91 (WIFIGFLGSMVINAIFPHLIA), 102–122 (LLTGLLLNIPVNSLVIYQMFL), and 130–150 (ELIISTLVVGIILLALIPLLF).

The protein localises to the cell membrane. This is an uncharacterized protein from Bacillus subtilis (strain 168).